The chain runs to 214 residues: Adenylate kinase (214 aa).

ATP is bound at residue 10-15; sequence GAGKGT. Positions 30–59 are NMP; the sequence is STGDMLRAAVKAGTPLGLEAKKVMDAGQLV. Residues Thr31, Arg36, 57-59, 85-88, and Gln92 each bind AMP; these read QLV and GFPR. Residues 122-159 are LID; the sequence is GRRVHPGSGRVYHIVYNPPKVEGKDDVTGEDLAIRPDD. Residues Arg123 and 132–133 contribute to the ATP site; that span reads VY. AMP contacts are provided by Arg156 and Arg167. Gln200 provides a ligand contact to ATP.

This sequence belongs to the adenylate kinase family. As to quaternary structure, monomer.

The protein localises to the cytoplasm. The catalysed reaction is AMP + ATP = 2 ADP. It functions in the pathway purine metabolism; AMP biosynthesis via salvage pathway; AMP from ADP: step 1/1. In terms of biological role, catalyzes the reversible transfer of the terminal phosphate group between ATP and AMP. Plays an important role in cellular energy homeostasis and in adenine nucleotide metabolism. This is Adenylate kinase from Shewanella loihica (strain ATCC BAA-1088 / PV-4).